The primary structure comprises 689 residues: Methionine--tRNA ligase (689 aa).

The 'HIGH' region signature appears at 15–25 (PYANGPIHLGH). Cys-146, Cys-149, Cys-159, and Cys-162 together coordinate Zn(2+). The short motif at 332-336 (KMSKS) is the 'KMSKS' region element. Lys-335 contributes to the ATP binding site. A tRNA-binding domain is found at 588–689 (DFAKIDLRIA…EGAQPGMRVK (102 aa)).

It belongs to the class-I aminoacyl-tRNA synthetase family. MetG type 1 subfamily. As to quaternary structure, homodimer. Zn(2+) is required as a cofactor.

The protein localises to the cytoplasm. It catalyses the reaction tRNA(Met) + L-methionine + ATP = L-methionyl-tRNA(Met) + AMP + diphosphate. Its function is as follows. Is required not only for elongation of protein synthesis but also for the initiation of all mRNA translation through initiator tRNA(fMet) aminoacylation. This Shewanella baltica (strain OS155 / ATCC BAA-1091) protein is Methionine--tRNA ligase.